We begin with the raw amino-acid sequence, 420 residues long: MNILDDLKARGLVYQTTDEEALYKRLESPMTLYCGFDPTADSLHIGHLLPVLMLRRFQLAGHCPIALVGGGTGLIGDPSGKTSERTLNPTEVVQEWANRIKEQLSCFLDFEGVGNPAIMANNYEWLGTINVIEFLRDIGKNFSLGSMLAKESVESRMSRGISFTEFSYQILQSYDFLKLNELYGCEMQIGGSDQWGNITSGTDLIRRMSVGEDRQVHGLTVPLVTKSDGTKFGKTEGGAVWLDPDKTSPYKFYQFWINTDDRDVVKYLNFFTFLSIEEIQGLAQEVESQPEKRNAQRMLAKEVTELVHGVEARERAEKISQALFTGGIANLTAKEVEEGFSDVPSADVEDQEMLLVDALIKVGAVSSRRQARESMESGAVYVNGIRQTDTTLTVAQLDKIESRFIVIRRGKKNYYLVKLV.

Position 33 (tyrosine 33) interacts with L-tyrosine. The 'HIGH' region motif lies at 38 to 47 (PTADSLHIGH). L-tyrosine-binding residues include tyrosine 168 and glutamine 172. A 'KMSKS' region motif is present at residues 231–235 (KFGKT). Lysine 234 provides a ligand contact to ATP. The region spanning 353–419 (MLLVDALIKV…GKKNYYLVKL (67 aa)) is the S4 RNA-binding domain.

This sequence belongs to the class-I aminoacyl-tRNA synthetase family. TyrS type 1 subfamily. In terms of assembly, homodimer.

The protein localises to the cytoplasm. It catalyses the reaction tRNA(Tyr) + L-tyrosine + ATP = L-tyrosyl-tRNA(Tyr) + AMP + diphosphate + H(+). In terms of biological role, catalyzes the attachment of tyrosine to tRNA(Tyr) in a two-step reaction: tyrosine is first activated by ATP to form Tyr-AMP and then transferred to the acceptor end of tRNA(Tyr). This Desulfitobacterium hafniense (strain DSM 10664 / DCB-2) protein is Tyrosine--tRNA ligase.